Consider the following 214-residue polypeptide: Octanoyltransferase (214 aa).

The region spanning 34 to 214 (GVQKELVWLL…KFNEIFSNFN (181 aa)) is the BPL/LPL catalytic domain. Substrate-binding positions include 73–80 (RGGKYTYH), 145–147 (AFG), and 158–160 (GVS). The Acyl-thioester intermediate role is filled by Cys-176.

It belongs to the LipB family.

It is found in the cytoplasm. It carries out the reaction octanoyl-[ACP] + L-lysyl-[protein] = N(6)-octanoyl-L-lysyl-[protein] + holo-[ACP] + H(+). It functions in the pathway protein modification; protein lipoylation via endogenous pathway; protein N(6)-(lipoyl)lysine from octanoyl-[acyl-carrier-protein]: step 1/2. Its function is as follows. Catalyzes the transfer of endogenously produced octanoic acid from octanoyl-acyl-carrier-protein onto the lipoyl domains of lipoate-dependent enzymes. Lipoyl-ACP can also act as a substrate although octanoyl-ACP is likely to be the physiological substrate. The protein is Octanoyltransferase of Ehrlichia chaffeensis (strain ATCC CRL-10679 / Arkansas).